The primary structure comprises 99 residues: Large ribosomal subunit protein uL23 (99 aa).

The protein belongs to the universal ribosomal protein uL23 family. As to quaternary structure, part of the 50S ribosomal subunit. Contacts protein L29, and trigger factor when it is bound to the ribosome.

One of the early assembly proteins it binds 23S rRNA. One of the proteins that surrounds the polypeptide exit tunnel on the outside of the ribosome. Forms the main docking site for trigger factor binding to the ribosome. This chain is Large ribosomal subunit protein uL23, found in Rhodopseudomonas palustris (strain HaA2).